The sequence spans 192 residues: Signal peptidase complex catalytic subunit sec11 (192 aa).

Topologically, residues 1–18 are cytoplasmic; that stretch reads MLSFLSSNLSSTRQSLAQ. Residues 19–39 traverse the membrane as a helical; Signal-anchor for type II membrane protein segment; sequence VLNFALVLSTAFMLWKGLSVF. Topologically, residues 40–192 are lumenal; sequence TASSSPIVVV…GLMVILQREQ (153 aa). Active-site charge relay system residues include Ser-53, His-92, and Asp-133. Residues 177 to 188 form a C-terminal short (CTS) helix region; the sequence is VLLGIMGLMVIL.

Belongs to the peptidase S26B family. As to quaternary structure, component of the signal peptidase complex (SPC) composed of a catalytic subunit SEC11 and three accessory subunits SPC1, SPC2 and SPC3. The complex induces a local thinning of the ER membrane which is used to measure the length of the signal peptide (SP) h-region of protein substrates. This ensures the selectivity of the complex towards h-regions shorter than 18-20 amino acids. SPC associates with the translocon complex.

It localises to the endoplasmic reticulum membrane. It carries out the reaction Cleavage of hydrophobic, N-terminal signal or leader sequences from secreted and periplasmic proteins.. Functionally, catalytic component of the signal peptidase complex (SPC) which catalyzes the cleavage of N-terminal signal sequences from nascent proteins as they are translocated into the lumen of the endoplasmic reticulum. Specifically cleaves N-terminal signal peptides that contain a hydrophobic alpha-helix (h-region) shorter than 18-20 amino acids. The protein is Signal peptidase complex catalytic subunit sec11 (sec11) of Aspergillus clavatus (strain ATCC 1007 / CBS 513.65 / DSM 816 / NCTC 3887 / NRRL 1 / QM 1276 / 107).